Reading from the N-terminus, the 390-residue chain is Succinate--CoA ligase [ADP-forming] subunit beta (390 aa).

The 236-residue stretch at Lys-9–Glu-244 folds into the ATP-grasp domain. Residues Lys-46, Gly-53–Gly-55, Glu-99, Leu-102, and Glu-107 contribute to the ATP site. Positions 199 and 213 each coordinate Mg(2+). Substrate contacts are provided by residues Asn-264 and Gly-321–Val-323.

It belongs to the succinate/malate CoA ligase beta subunit family. In terms of assembly, heterotetramer of two alpha and two beta subunits. It depends on Mg(2+) as a cofactor.

It catalyses the reaction succinate + ATP + CoA = succinyl-CoA + ADP + phosphate. The catalysed reaction is GTP + succinate + CoA = succinyl-CoA + GDP + phosphate. Its pathway is carbohydrate metabolism; tricarboxylic acid cycle; succinate from succinyl-CoA (ligase route): step 1/1. Functionally, succinyl-CoA synthetase functions in the citric acid cycle (TCA), coupling the hydrolysis of succinyl-CoA to the synthesis of either ATP or GTP and thus represents the only step of substrate-level phosphorylation in the TCA. The beta subunit provides nucleotide specificity of the enzyme and binds the substrate succinate, while the binding sites for coenzyme A and phosphate are found in the alpha subunit. This chain is Succinate--CoA ligase [ADP-forming] subunit beta, found in Campylobacter curvus (strain 525.92).